A 1757-amino-acid chain; its full sequence is MADEEMDGAERMDVSPEPPLAPQRPASWWDQQVDFYTAFLHHLAQLVPEIYFAEMDPDLEKQEESVQMSILTPLEWYLFGEDPDICLEKLKHSGAFQLCGKVFKSGETTYSCRDCAIDPTCVLCMDCFQSSVHKNHRYKMHTSTGGGFCDCGDTEAWKTGPFCVDHEPGRAGTTKESLHCPLNEEVIAQARRIFPSVIKYIVEMTIWEEEKELPPELQIREKNERYYCVLFNDEHHSYDHVIYSLQRALDCELAEAQLHTTAIDKEGRRAVKAGVYATCQEAKEDIKSHSENVSQHPLHVEVLHSVVMAHQKFALRLGSWMNKIMSYSSDFRQIFCQACLVEEPGSENPCLISRLMLWDAKLYKGARKILHELIFSSFFMEMEYKKLFAMEFVKYYKQLQKEYISDDHERSISITALSVQMLTVPTLARHLIEEQNVISVITETLLEVLPEYLDRNNKFNFQGYSQDKLGRVYAVICDLKYILISKPVIWTERLRAQFLEGFRSFLKILTCMQGMEEIRRQVGQHIEVDPDWEAAIAIQMQLKNILLMFQEWCACDEDLLLVAYKECHKAVMRCSTNFMSSTKTVVQLCGHSLETKSYKVSEDLVSIHLPLSRTLAGLHVRLSRLGAISRLHEFVPFDGFQVEVLVEYPLRCLVLVAQVVAEMWRRNGLSLISQVFYYQDVKCREEMYDKDIIMLQIGASIMDPNKFLLLVLQRYELTDAFNKTISTKDQDLIKQYNTLIEEMLQVLIYIVGERYVPGVGNVTREEVIMREITHLLCIEPMPHSAIARNLPENENNETGLENVINKVATFKKPGVSGHGVYELKDESLKDFNMYFYHYSKTQHSKAEHMQKKRRKQENKDEALPPPPPPEFCPAFSKVVNLLSCDVMMYILRTIFERAVDMESNLWTEGMLQMAFHILALGLLEEKQQLQKAPEEEVAFDFYHKASRLGSSAMNAQNIQMLLEKLKGIPQLESQKDMITWILQMFDTVKRLREKSCLVVATTSGLECVKSEEITHDKEKAERKRKAEAARLHRQKIMAQMSALQKNFIETHKLMYDNTSEVTGKEDSIMEEESTSAVSEASRIALGPKRGPAVTEKEVLTCILCQEEQEVKLENNAMVLSACVQKSTALTQHRGKPVDHLGETLDPLFMDPDLAHGTYTGSCGHVMHAVCWQKYFEAVQLSSQQRIHVDLFDLESGEYLCPLCKSLCNTVIPIIPLQPQKINSENAEALAQLLTLARWIQTVLARISGYNIKHAKGEAPAVPVLFNQGMGDSTFEFHSILSFGVQSSVKYSNSIKEMVILFATTIYRIGLKVPPDELDPRVPMMTWSTCAFTIQAIENLLGDEGKPLFGALQNRQHNGLKALMQFAVAQRTTCPQVLIHKHLARLLSVILPNLQSENTPGLLSVDLFHVLVGAVLAFPSLYWDDTVDLQPSPLSSSYNHLYLFHLITMAHMLQILLTTDTDLSSGPPLAEGEEDSEEARCASAFFVEVSQHTDGLAGCGAPGWYLWLSLRNGITPYLRCAALLFHYLLGVAPPEELFANSAEGEFSALCSYLSLPTNLFLLFQEYWDTIRPLLQRWCGDPALLKSLKQKSAVVRYPRKRNSLIELPEDYSCLLNQASHFRCPRSADDERKHPVLCLFCGAILCSQNICCQEIVNGEEVGACVFHALHCGAGVCIFLKIRECRVVLVEGKARGCAYPAPYLDEYGETDPGLKRGNPLHLSRERYRKLHLVWQQHCIIEEIARSQETNQMLFGFNWQLL.

Positions 1–24 are disordered; it reads MADEEMDGAERMDVSPEPPLAPQR. N-acetylalanine is present on Ala-2. The UBR-type zinc-finger motif lies at 97–168; the sequence is QLCGKVFKSG…TGPFCVDHEP (72 aa). Zn(2+)-binding residues include Cys-99, Cys-112, Cys-115, Cys-124, Cys-127, His-133, and His-136. An a peptide-binding site is contributed by Phe-148. Zn(2+) is bound at residue Cys-149. Asp-150 lines the a peptide pocket. Cys-151 is a Zn(2+) binding site. Asp-153 serves as a coordination point for a peptide. The Zn(2+) site is built by Cys-163 and His-166. The tract at residues 842-868 is disordered; the sequence is QHSKAEHMQKKRRKQENKDEALPPPPP. Residues 1022–1057 form a UBC2-binding region (U2BR) region; it reads RKRKAEAARLHRQKIMAQMSALQKNFIETHKLMYDN. Zn(2+) is bound by residues Cys-1101, Cys-1104, Cys-1162, His-1164, His-1167, and Cys-1170. Residues 1101 to 1204 form an RING-type; atypical zinc finger; that stretch reads CILCQEEQEV…SGEYLCPLCK (104 aa). Position 1182 is a phosphoserine (Ser-1182). Residues Cys-1200, Cys-1203, Cys-1635, Cys-1638, and Cys-1661 each coordinate Zn(2+).

Belongs to the E3 ubiquitin-protein ligase UBR1-like family. As to quaternary structure, interacts with RECQL4. As to expression, present in skeletal muscle and liver (at protein level). Broadly expressed, with highest levels in skeletal muscle and heart. Expressed in acinar cells of the pancreas. In testes, expressed primarily in spermatogonia.

Its subcellular location is the cytoplasm. It localises to the cytosol. It carries out the reaction S-ubiquitinyl-[E2 ubiquitin-conjugating enzyme]-L-cysteine + [acceptor protein]-L-lysine = [E2 ubiquitin-conjugating enzyme]-L-cysteine + N(6)-ubiquitinyl-[acceptor protein]-L-lysine.. Its pathway is protein modification; protein ubiquitination. In terms of biological role, E3 ubiquitin-protein ligase which is a component of the N-end rule pathway. Recognizes and binds proteins bearing specific N-terminal residues (N-degrons) that are destabilizing according to the N-end rule, leading to their ubiquitination and subsequent degradation. Recognizes both type-1 and type-2 N-degrons, containing positively charged amino acids (Arg, Lys and His) and bulky and hydrophobic amino acids, respectively. Does not ubiquitinate proteins that are acetylated at the N-terminus. In contrast, it strongly binds methylated N-degrons. Binds leucine and is a negative regulator of the leucine-mTOR signaling pathway, thereby controlling cell growth. This chain is E3 ubiquitin-protein ligase UBR1, found in Mus musculus (Mouse).